A 701-amino-acid chain; its full sequence is Putative pentatricopeptide repeat-containing protein At3g25970 (701 aa).

PPR repeat units lie at residues 34 to 64 (DIYV…MPKR), 65 to 99 (DSVS…GSDV), 100 to 134 (DGYS…GYEC), 135 to 165 (NVYV…ISEP), 166 to 200 (NSVS…AAVT), 202 to 236 (DAGT…GLQH), 237 to 267 (EITI…LGGS), 269 to 303 (DLIS…WVET), 304 to 338 (DIYT…GLEQ), 339 to 371 (VTSA…LKSK), 372 to 406 (DLIS…EIKV), 407 to 441 (DDYA…GFVS), 442 to 472 (NEFV…ISSK), 474 to 508 (STVA…NVKL), 509 to 539 (DHVT…MEPV), and 545 to 575 (RMEH…MPLN). Positions 580-655 (VLKTFLGVCR…VPGWSWIEIR (76 aa)) are type E motif. Residues 656–686 (NQVKAFNAEDRSNPLCQDIYMMIKDLTQEMQ) are type E(+) motif.

This sequence belongs to the PPR family. PCMP-E subfamily.

The protein is Putative pentatricopeptide repeat-containing protein At3g25970 (PCMP-E46) of Arabidopsis thaliana (Mouse-ear cress).